The chain runs to 375 residues: tRNA-specific 2-thiouridylase MnmA (375 aa).

Residues 9–16 and Leu-35 contribute to the ATP site; that span reads AMSGGVDS. Cys-105 acts as the Nucleophile in catalysis. A disulfide bridge connects residues Cys-105 and Cys-201. Gly-129 lines the ATP pocket. The segment at 151–153 is interaction with tRNA; the sequence is KNQ. Catalysis depends on Cys-201, which acts as the Cysteine persulfide intermediate. An interaction with tRNA region spans residues 307 to 308; sequence RY.

This sequence belongs to the MnmA/TRMU family.

It localises to the cytoplasm. The enzyme catalyses S-sulfanyl-L-cysteinyl-[protein] + uridine(34) in tRNA + AH2 + ATP = 2-thiouridine(34) in tRNA + L-cysteinyl-[protein] + A + AMP + diphosphate + H(+). In terms of biological role, catalyzes the 2-thiolation of uridine at the wobble position (U34) of tRNA, leading to the formation of s(2)U34. This chain is tRNA-specific 2-thiouridylase MnmA, found in Leptospira interrogans serogroup Icterohaemorrhagiae serovar copenhageni (strain Fiocruz L1-130).